Consider the following 219-residue polypeptide: Ribose-5-phosphate isomerase A (219 aa).

Substrate-binding positions include 28-31 (TGST), 81-84 (DGAD), and 94-97 (KGGG). Catalysis depends on E103, which acts as the Proton acceptor. Substrate is bound at residue K121.

It belongs to the ribose 5-phosphate isomerase family. Homodimer.

It carries out the reaction aldehydo-D-ribose 5-phosphate = D-ribulose 5-phosphate. It functions in the pathway carbohydrate degradation; pentose phosphate pathway; D-ribose 5-phosphate from D-ribulose 5-phosphate (non-oxidative stage): step 1/1. Functionally, catalyzes the reversible conversion of ribose-5-phosphate to ribulose 5-phosphate. The protein is Ribose-5-phosphate isomerase A of Edwardsiella ictaluri (strain 93-146).